Here is a 289-residue protein sequence, read N- to C-terminus: Ribosomal protein L11 methyltransferase (289 aa).

Residues T134, G155, D177, and N225 each contribute to the S-adenosyl-L-methionine site.

Belongs to the methyltransferase superfamily. PrmA family.

It is found in the cytoplasm. It catalyses the reaction L-lysyl-[protein] + 3 S-adenosyl-L-methionine = N(6),N(6),N(6)-trimethyl-L-lysyl-[protein] + 3 S-adenosyl-L-homocysteine + 3 H(+). Functionally, methylates ribosomal protein L11. The polypeptide is Ribosomal protein L11 methyltransferase (Parasynechococcus marenigrum (strain WH8102)).